A 327-amino-acid chain; its full sequence is tRNA dimethylallyltransferase (327 aa).

14 to 21 (GPTASGKT) contacts ATP. 16–21 (TASGKT) contacts substrate. Interaction with substrate tRNA stretches follow at residues 39–42 (DSAL) and 163–167 (QRIQR).

It belongs to the IPP transferase family. Monomer. Requires Mg(2+) as cofactor.

The enzyme catalyses adenosine(37) in tRNA + dimethylallyl diphosphate = N(6)-dimethylallyladenosine(37) in tRNA + diphosphate. Its function is as follows. Catalyzes the transfer of a dimethylallyl group onto the adenine at position 37 in tRNAs that read codons beginning with uridine, leading to the formation of N6-(dimethylallyl)adenosine (i(6)A). The chain is tRNA dimethylallyltransferase from Xanthomonas oryzae pv. oryzae (strain PXO99A).